Here is a 166-residue protein sequence, read N- to C-terminus: Ubiquitin-fold modifier-conjugating enzyme 1 (166 aa).

Cysteine 116 acts as the Glycyl thioester intermediate in catalysis.

It belongs to the ubiquitin-conjugating enzyme family. UFC1 subfamily.

In terms of biological role, E2-like enzyme which forms an intermediate with UFM1 via a thioester linkage. The protein is Ubiquitin-fold modifier-conjugating enzyme 1 of Monosiga brevicollis (Choanoflagellate).